The following is a 96-amino-acid chain: DNA-directed RNA polymerase subunit Rpo11 (96 aa).

Belongs to the archaeal Rpo11/eukaryotic RPB11/RPC19 RNA polymerase subunit family. Part of the RNA polymerase complex.

The protein localises to the cytoplasm. The catalysed reaction is RNA(n) + a ribonucleoside 5'-triphosphate = RNA(n+1) + diphosphate. Functionally, DNA-dependent RNA polymerase (RNAP) catalyzes the transcription of DNA into RNA using the four ribonucleoside triphosphates as substrates. This Methanococcus maripaludis (strain C5 / ATCC BAA-1333) protein is DNA-directed RNA polymerase subunit Rpo11.